Consider the following 343-residue polypeptide: GTPase Obg (343 aa).

The Obg domain maps to 1–159; it reads MKFLDQAKIY…RWVWLRLKLI (159 aa). In terms of domain architecture, OBG-type G spans 160–328; it reads ADAGLVGLPN…LLRQVMTYVA (169 aa). GTP contacts are provided by residues 166–173, 191–195, 213–216, 280–283, and 309–311; these read GLPNAGKS, FTTLH, DIPG, NKCD, and SGV. Serine 173 and threonine 193 together coordinate Mg(2+).

Belongs to the TRAFAC class OBG-HflX-like GTPase superfamily. OBG GTPase family. Monomer. The cofactor is Mg(2+).

The protein resides in the cytoplasm. In terms of biological role, an essential GTPase which binds GTP, GDP and possibly (p)ppGpp with moderate affinity, with high nucleotide exchange rates and a fairly low GTP hydrolysis rate. Plays a role in control of the cell cycle, stress response, ribosome biogenesis and in those bacteria that undergo differentiation, in morphogenesis control. The chain is GTPase Obg from Granulibacter bethesdensis (strain ATCC BAA-1260 / CGDNIH1).